The following is a 285-amino-acid chain: ATP synthase subunit a (285 aa).

6 helical membrane-spanning segments follow: residues 41-61 (TWHVDTLAWSIGLGLIFLWIF), 102-122 (IAPLALTIFVWVFLMNLMDLI), 164-184 (LGVFILMVGFAIKIKGIGGFI), 197-217 (VFVQILLIPFNLLLELIALVS), 226-246 (LFGNLYAGELIFILIGAIGFM), and 252-272 (FVWAVFHILVITLQAFLFMML).

Belongs to the ATPase A chain family. F-type ATPases have 2 components, CF(1) - the catalytic core - and CF(0) - the membrane proton channel. CF(1) has five subunits: alpha(3), beta(3), gamma(1), delta(1), epsilon(1). CF(0) has three main subunits: a(1), b(2) and c(9-12). The alpha and beta chains form an alternating ring which encloses part of the gamma chain. CF(1) is attached to CF(0) by a central stalk formed by the gamma and epsilon chains, while a peripheral stalk is formed by the delta and b chains.

Its subcellular location is the cell inner membrane. Key component of the proton channel; it plays a direct role in the translocation of protons across the membrane. The chain is ATP synthase subunit a from Pseudoalteromonas translucida (strain TAC 125).